A 402-amino-acid chain; its full sequence is Probable glutamate 5-kinase (402 aa).

Ser-58, Asp-145, and Asn-157 together coordinate substrate. Residues 177–178 and 218–224 contribute to the ATP site; these read TD and TGGMKTK. The PUA domain occupies 295–373; it reads HGSLEIDRGA…KEIASILGYN (79 aa).

This sequence belongs to the glutamate 5-kinase family.

The protein resides in the cytoplasm. It carries out the reaction L-glutamate + ATP = L-glutamyl 5-phosphate + ADP. It participates in amino-acid biosynthesis; L-proline biosynthesis; L-glutamate 5-semialdehyde from L-glutamate: step 1/2. Catalyzes the transfer of a phosphate group to glutamate to form glutamate 5-phosphate which rapidly cyclizes to 5-oxoproline. The polypeptide is Probable glutamate 5-kinase (Schizosaccharomyces pombe (strain 972 / ATCC 24843) (Fission yeast)).